The following is a 309-amino-acid chain: HPr kinase/phosphorylase (309 aa).

Residues His138 and Lys159 contribute to the active site. Residue 153–160 (GQSGVGKS) participates in ATP binding. Ser160 is a binding site for Mg(2+). Asp177 serves as the catalytic Proton acceptor; for phosphorylation activity. Proton donor; for dephosphorylation activity. The segment at 201-210 (LEIRGLGIIN) is important for the catalytic mechanism of both phosphorylation and dephosphorylation. Glu202 is a Mg(2+) binding site. Arg243 is an active-site residue. Residues 264 to 269 (PVRPGR) form an important for the catalytic mechanism of dephosphorylation region.

It belongs to the HPrK/P family. In terms of assembly, homohexamer. Mg(2+) serves as cofactor.

It catalyses the reaction [HPr protein]-L-serine + ATP = [HPr protein]-O-phospho-L-serine + ADP + H(+). The catalysed reaction is [HPr protein]-O-phospho-L-serine + phosphate + H(+) = [HPr protein]-L-serine + diphosphate. In terms of biological role, catalyzes the ATP- as well as the pyrophosphate-dependent phosphorylation of a specific serine residue in HPr, a phosphocarrier protein of the phosphoenolpyruvate-dependent sugar phosphotransferase system (PTS). HprK/P also catalyzes the pyrophosphate-producing, inorganic phosphate-dependent dephosphorylation (phosphorolysis) of seryl-phosphorylated HPr (P-Ser-HPr). The two antagonistic activities of HprK/P are regulated by several intracellular metabolites, which change their concentration in response to the absence or presence of rapidly metabolisable carbon sources (glucose, fructose, etc.) in the growth medium. Also phosphorylates/dephosphorylates the HPr-like catabolite repression protein crh on a specific serine residue. Therefore, by controlling the phosphorylation state of HPr and crh, HPrK/P is a sensor enzyme that plays a major role in the regulation of carbon metabolism and sugar transport: it mediates carbon catabolite repression (CCR), and regulates PTS-catalyzed carbohydrate uptake and inducer exclusion. This chain is HPr kinase/phosphorylase, found in Bacillus cereus (strain AH820).